The following is a 681-amino-acid chain: PTS system glucose-specific EIICBA component (681 aa).

Residues 3-414 (KKLFGQLQRI…LKYKTPGRED (412 aa)) form the PTS EIIC type-1 domain. The next 10 membrane-spanning stretches (helical) occupy residues 16–36 (LMLP…GTAM), 73–93 (MIFA…AAIA), 126–146 (ILGI…GALA), 170–190 (FVPI…ALIW), 199–219 (AFST…FGFI), 273–293 (FMQG…LAIY), 303–323 (VVAG…ITEP), 328–348 (FLFV…LSFL), 355–375 (LHLG…GILP), and 383–403 (VIPV…FLIV). In terms of domain architecture, PTS EIIB type-1 spans 425–506 (TELPYAVLEA…QQIMNGQVVE (82 aa)). Cys447 (phosphocysteine intermediate; for EIIB activity) is an active-site residue. In terms of domain architecture, PTS EIIA type-1 spans 551-655 (DQVFSEKMMG…SDITPIIVTQ (105 aa)). The active-site Tele-phosphohistidine intermediate; for EIIA activity is His603.

It is found in the cell membrane. The catalysed reaction is N(pros)-phospho-L-histidyl-[protein] + D-glucose(out) = D-glucose 6-phosphate(in) + L-histidyl-[protein]. Functionally, the phosphoenolpyruvate-dependent sugar phosphotransferase system (sugar PTS), a major carbohydrate active transport system, catalyzes the phosphorylation of incoming sugar substrates concomitantly with their translocation across the cell membrane. This system is involved in glucose transport. The protein is PTS system glucose-specific EIICBA component (ptsG) of Staphylococcus aureus (strain NCTC 8325 / PS 47).